Here is a 362-residue protein sequence, read N- to C-terminus: Histidinol-phosphate aminotransferase (362 aa).

Lys-211 is modified (N6-(pyridoxal phosphate)lysine).

This sequence belongs to the class-II pyridoxal-phosphate-dependent aminotransferase family. Histidinol-phosphate aminotransferase subfamily. As to quaternary structure, homodimer. Pyridoxal 5'-phosphate serves as cofactor.

The enzyme catalyses L-histidinol phosphate + 2-oxoglutarate = 3-(imidazol-4-yl)-2-oxopropyl phosphate + L-glutamate. It functions in the pathway amino-acid biosynthesis; L-histidine biosynthesis; L-histidine from 5-phospho-alpha-D-ribose 1-diphosphate: step 7/9. In Serratia proteamaculans (strain 568), this protein is Histidinol-phosphate aminotransferase.